Here is a 599-residue protein sequence, read N- to C-terminus: Protein ref(2)P (599 aa).

The 86-residue stretch at 3 to 88 folds into the PB1 domain; it reads EKLLKITYQG…CESNMHVQVA (86 aa). The ZZ-type zinc finger occupies 122 to 173; sequence HDSVQCDGCGLAPLIGFRYKCVQCSNFDLCQKCESAHKHPEHLMLRMPTNNG. Residues Cys-127, Cys-130, Cys-142, Cys-145, Cys-151, Cys-154, His-160, and His-163 each contribute to the Zn(2+) site. Disordered stretches follow at residues 192 to 225, 245 to 319, 357 to 453, and 507 to 544; these read RRSRGHCPFQEASQPAPAAEPARDSRRERRHARR, TTAT…INLD, GIFA…LDPE, and ASANTQTAQVDTVSTSTSTTSVTTNSVGTSPAAPDDKR. Residues 199 to 211 show a composition bias toward low complexity; sequence PFQEASQPAPAAE. Residues 276–286 are compositionally biased toward basic and acidic residues; it reads KATESEAKPTE. Polar residues predominate over residues 291 to 319; it reads NTDQSVPTTEDPVTTPRSTEPTTPVINLD. Residues 375-411 show a composition bias toward low complexity; sequence QSQSSGQSAASSASQSAVPSAAPSANQSNVPSANQSA. A run of 3 repeats spans residues 386 to 393, 399 to 406, and 407 to 413. The segment at 386–413 is 3 X 8 AA repeats of S-A-N-Q-S-X-X-P; that stretch reads SASQSAVPSAAPSANQSNVPSANQSATP. Residues 412-423 show a composition bias toward polar residues; that stretch reads TPSISGSISDAQ. Over residues 511-536 the composition is skewed to low complexity; sequence TQTAQVDTVSTSTSTTSVTTNSVGTS. One can recognise a UBA domain in the interval 550–595; the sequence is HTDERINQSIHAMMAMGFSNEGAWLTQLLESVQGNIPAALDVMHVS.

As to quaternary structure, interacts with aPKC and Traf6.

The protein resides in the nucleus. It is found in the cytoplasm. In terms of biological role, required for selective autophagy activation by ubiquitinated proteins. Implicated in sigma rhabdovirus multiplication and necessary for male fertility. Involved in activating transcription of Drs. The sequence is that of Protein ref(2)P (ref(2)P) from Drosophila simulans (Fruit fly).